We begin with the raw amino-acid sequence, 356 residues long: Probable neutral protease 2 homolog ARB_04769 (356 aa).

An N-terminal signal peptide occupies residues 1–17 (MQFTALLAALGAPLALA). Residues 18–183 (ASIPAAAHNH…DDSTGVIDKR (166 aa)) constitute a propeptide that is removed on maturation. Intrachain disulfides connect cysteine 191–cysteine 262 and cysteine 269–cysteine 287. An N-linked (GlcNAc...) asparagine glycan is attached at asparagine 205. Histidine 311 serves as a coordination point for Zn(2+). Glutamate 312 is a catalytic residue. 2 residues coordinate Zn(2+): histidine 315 and aspartate 326.

The protein belongs to the peptidase M35 family. It depends on Zn(2+) as a cofactor.

The protein resides in the secreted. The catalysed reaction is Preferential cleavage of bonds with hydrophobic residues in P1'. Also 3-Asn-|-Gln-4 and 8-Gly-|-Ser-9 bonds in insulin B chain.. Functionally, probable secreted metalloprotease that shows high activities on basic nuclear substrates such as histone and protamine. May be involved in virulence. This Arthroderma benhamiae (strain ATCC MYA-4681 / CBS 112371) (Trichophyton mentagrophytes) protein is Probable neutral protease 2 homolog ARB_04769.